A 1311-amino-acid polypeptide reads, in one-letter code: Nephrocystin-3 (1311 aa).

Residues 81–183 (SKNNEIASMQ…LQRLQAQGIQ (103 aa)) are a coiled coil. TPR repeat units follow at residues 889–923 (LSYWQLVGKDKISMASEYFDALKQYERSCEGEEKM), 927–960 (ADLYETLGRFLKDLGLLSQAVTPLQRSLEIRETA), 969–1002 (AQSLHQLAGVYVQSKKFGNAEQLYKQALEISENA), 1011–1044 (ARELDALAVLYQKQNKFEQAEQLRKKSLKIRQKS), 1077–1110 (ARTLNELGVLYYLQNNLETAETFLKRSLEMRERV), 1119–1152 (AQSINNLAALYNEKKQYDKAEELYERALDIRRRA), 1161–1194 (AYTVKHLAVLYKRKGKLDKAVPLYELAVEIRQKS), 1203–1236 (ATALVNLAVLYCQMKKQAEASPLYERAMKIYEDS), and 1245–1278 (GETLKNLAVLRYEEGDFEKAAELYKRAMEIKETE).

It localises to the cell projection. The protein localises to the cilium. Required for normal ciliary development and function. Inhibits disheveled-1-induced canonical Wnt-signaling activity and may also play a role in the control of non-canonical Wnt signaling that regulates planar cell polarity. Probably acts as a molecular switch between different Wnt signaling pathways. Required for proper convergent extension cell movements. The chain is Nephrocystin-3 (nphp3) from Xenopus tropicalis (Western clawed frog).